The chain runs to 373 residues: uncharacterized protein (373 aa).

This sequence belongs to the glycosyltransferase 28 family.

This is an uncharacterized protein from Bacillus subtilis (strain 168).